The chain runs to 681 residues: Long-chain-fatty-acid--CoA ligase heimdall (681 aa).

Residues Thr-223–Lys-231, Glu-414–Ser-419, Asp-491, Arg-506, and Lys-639 contribute to the ATP site.

The protein belongs to the ATP-dependent AMP-binding enzyme family. Bubblegum subfamily.

The enzyme catalyses a long-chain fatty acid + ATP + CoA = a long-chain fatty acyl-CoA + AMP + diphosphate. Mediates activation of long-chain fatty acids for both synthesis of cellular lipids, and degradation via beta-oxidation. Probably by regulating lipid storage and catabolism, plays a role in neuronal function. The sequence is that of Long-chain-fatty-acid--CoA ligase heimdall from Drosophila melanogaster (Fruit fly).